A 376-amino-acid polypeptide reads, in one-letter code: tRNA-specific 2-thiouridylase MnmA (376 aa).

Residues 14–21 (GMSGGVDS) and methionine 40 each bind ATP. The interaction with target base in tRNA stretch occupies residues 100–102 (NPD). Cysteine 105 functions as the Nucleophile in the catalytic mechanism. Cysteine 105 and cysteine 202 are joined by a disulfide. Glycine 129 is an ATP binding site. Residues 152-154 (KDQ) are interaction with tRNA. Residue cysteine 202 is the Cysteine persulfide intermediate of the active site. The segment at 315 to 316 (RY) is interaction with tRNA.

Belongs to the MnmA/TRMU family.

The protein localises to the cytoplasm. It catalyses the reaction S-sulfanyl-L-cysteinyl-[protein] + uridine(34) in tRNA + AH2 + ATP = 2-thiouridine(34) in tRNA + L-cysteinyl-[protein] + A + AMP + diphosphate + H(+). Its function is as follows. Catalyzes the 2-thiolation of uridine at the wobble position (U34) of tRNA, leading to the formation of s(2)U34. The protein is tRNA-specific 2-thiouridylase MnmA of Lactococcus lactis subsp. lactis (strain IL1403) (Streptococcus lactis).